Here is a 359-residue protein sequence, read N- to C-terminus: Probable dual-specificity RNA methyltransferase RlmN (359 aa).

The Proton acceptor role is filled by E99. Residues 105–342 form the Radical SAM core domain; sequence TENRRTACVS…VTIRKSYGTT (238 aa). A disulfide bridge links C112 with C347. The [4Fe-4S] cluster site is built by C119, C123, and C126. Residues 171–172, S204, 227–229, and N304 each bind S-adenosyl-L-methionine; these read GE and SLH. C347 serves as the catalytic S-methylcysteine intermediate.

It belongs to the radical SAM superfamily. RlmN family. Requires [4Fe-4S] cluster as cofactor.

Its subcellular location is the cytoplasm. The catalysed reaction is adenosine(2503) in 23S rRNA + 2 reduced [2Fe-2S]-[ferredoxin] + 2 S-adenosyl-L-methionine = 2-methyladenosine(2503) in 23S rRNA + 5'-deoxyadenosine + L-methionine + 2 oxidized [2Fe-2S]-[ferredoxin] + S-adenosyl-L-homocysteine. The enzyme catalyses adenosine(37) in tRNA + 2 reduced [2Fe-2S]-[ferredoxin] + 2 S-adenosyl-L-methionine = 2-methyladenosine(37) in tRNA + 5'-deoxyadenosine + L-methionine + 2 oxidized [2Fe-2S]-[ferredoxin] + S-adenosyl-L-homocysteine. Its function is as follows. Specifically methylates position 2 of adenine 2503 in 23S rRNA and position 2 of adenine 37 in tRNAs. The protein is Probable dual-specificity RNA methyltransferase RlmN of Pelodictyon phaeoclathratiforme (strain DSM 5477 / BU-1).